The following is a 398-amino-acid chain: ATP-dependent RNA helicase eIF4A (398 aa).

Positions 25 to 53 (DSFDTMNLKPELLRGVYAYGFERPSAIQQ) match the Q motif motif. The Helicase ATP-binding domain occupies 56-226 (IMPVIKGHDV…TKFMRDPVRI (171 aa)). 69-76 (AQSGTGKT) is a binding site for ATP. The DEAD box motif lies at 174–177 (DEAD). A Helicase C-terminal domain is found at 237 to 398 (GIKQFYIAVE…EMPMNVADLI (162 aa)).

The protein belongs to the DEAD box helicase family. eIF4A subfamily. Component of the eIF4F complex, which composition varies with external and internal environmental conditions. It is composed of at least eIF4A, eIF4E and eIF4G.

The protein localises to the cytoplasm. It carries out the reaction ATP + H2O = ADP + phosphate + H(+). ATP-dependent RNA helicase which is a subunit of the eIF4F complex involved in cap recognition and is required for mRNA binding to ribosome. In the current model of translation initiation, eIF4A unwinds RNA secondary structures in the 5'-UTR of mRNAs which is necessary to allow efficient binding of the small ribosomal subunit, and subsequent scanning for the initiator codon. The chain is ATP-dependent RNA helicase eIF4A (tif1) from Botryotinia fuckeliana (strain B05.10) (Noble rot fungus).